Reading from the N-terminus, the 107-residue chain is U1-lycotoxin-Ls1b (107 aa).

The signal sequence occupies residues 1–20 (MMKALVVVALLVTLISYSSS). The propeptide occupies 21–41 (EGIDDLEADELLSLMANEQTR). 4 disulfides stabilise this stretch: cysteine 44/cysteine 59, cysteine 51/cysteine 68, cysteine 58/cysteine 86, and cysteine 70/cysteine 84.

This sequence belongs to the neurotoxin 19 (CSTX) family. 04 (U1-Lctx) subfamily. As to expression, expressed by the venom gland.

The protein localises to the secreted. The chain is U1-lycotoxin-Ls1b from Lycosa singoriensis (Wolf spider).